Here is a 350-residue protein sequence, read N- to C-terminus: Chemokine C-C motif receptor-like 2 (350 aa).

Topologically, residues 1-43 (MANYTSAPEDDYDVFIEDDLSNDERELCSPYDPQALLAQLVPY) are extracellular. N-linked (GlcNAc...) asparagine glycosylation occurs at Asn3. A helical membrane pass occupies residues 44-64 (LFITVFLVGLLDNILVVLIMV). The Cytoplasmic portion of the chain corresponds to 65-74 (KYKGLKQVEN). Residues 75–95 (IYLLNLAVCNLCFLCTLPFWV) traverse the membrane as a helical segment. The Extracellular segment spans residues 96 to 110 (HMAWHEGDPGEPLCK). Cys109 and Cys187 form a disulfide bridge. A helical membrane pass occupies residues 111–131 (ILLVLYSVGLFSEAFFNVLLT). Topologically, residues 132–149 (VQRYQKFFQMRGFFSATR) are cytoplasmic. A helical transmembrane segment spans residues 150-170 (MVAGSIFPSALVWVIAVLVML). At 171–204 (PELAFYKPQMENQKYKCFFGRPLFLPADETFWKH) the chain is on the extracellular side. A helical transmembrane segment spans residues 205–225 (FLTLKMNILGFLLPLFVFVFC). The Cytoplasmic segment spans residues 226-244 (YVRMRRTLKFGERGYDLFK). A helical membrane pass occupies residues 245-265 (LVFTIMVVFLLMWGPYNIALF). Residues 266-288 (LSAFNEHFSLHGCESSHNLDRST) are Extracellular-facing. A helical transmembrane segment spans residues 289-309 (LITKIIATTHCCVNPLLYVFF). Topologically, residues 310–350 (DEAFRKHLYHFCHLCNDTAPQPTEEPAQGTSREEPCLSTKM) are cytoplasmic. Residues 329-350 (PQPTEEPAQGTSREEPCLSTKM) form a disordered region.

Belongs to the G-protein coupled receptor 1 family.

The protein resides in the cell membrane. Its function is as follows. Receptor for CCL19 and chemerin/RARRES2. Does not appear to be a signaling receptor, but may have a role in modulating chemokine-triggered immune responses by capturing and internalizing CCL19 or by presenting RARRES2 ligand to CMKLR1, a functional signaling receptor. Plays a critical role for the development of Th2 responses. This Sus scrofa (Pig) protein is Chemokine C-C motif receptor-like 2 (CCRL2).